Reading from the N-terminus, the 160-residue chain is Transcription elongation factor GreA (160 aa).

Positions 43 to 75 (LSENAEYEAAREQQAQMESKIVDLENKLTRASI) form a coiled coil.

This sequence belongs to the GreA/GreB family.

Its function is as follows. Necessary for efficient RNA polymerase transcription elongation past template-encoded arresting sites. The arresting sites in DNA have the property of trapping a certain fraction of elongating RNA polymerases that pass through, resulting in locked ternary complexes. Cleavage of the nascent transcript by cleavage factors such as GreA or GreB allows the resumption of elongation from the new 3'terminus. GreA releases sequences of 2 to 3 nucleotides. This Prosthecochloris aestuarii (strain DSM 271 / SK 413) protein is Transcription elongation factor GreA.